We begin with the raw amino-acid sequence, 1687 residues long: PH domain leucine-rich repeat-containing protein phosphatase 1 (1687 aa).

An N-acetylmethionine modification is found at Met1. Disordered stretches follow at residues 1 to 96 and 230 to 406; these read MEPA…GGGA and AAAP…AAPD. The segment covering 78–96 has biased composition (low complexity); sequence APQPAAGGAAPVPAAGGGA. Ser286 is modified (phosphoserine). The segment covering 314-326 has biased composition (polar residues); the sequence is DTESFSLSPSAES. Ser372 bears the Phosphoserine mark. The PH domain occupies 492-592; sequence RIQLSGMYNV…WLRQVSKVAS (101 aa). LRR repeat units lie at residues 594–615, 617–638, 648–669, 671–692, 694–715, 717–739, 740–760, 764–785, 788–809, 829–850, 851–872, 874–895, 897–918, 919–940, 943–964, 969–989, 993–1014, 1017–1038, 1040–1061, 1062–1083, and 1085–1106; these read RISS…LFYS, DLTH…PAAR, KLKS…VCSI, TLAE…VGDM, NLQT…LESM, QLSY…EKLT, AVDK…QALR, HIKH…EVDF, HVTQ…IFNN, FLKA…PVPN, YLSY…VCES, KLEV…LFCN, SLRK…LERT, SVEV…LLMK, SLRF…TLSE, ILQE…PLLT, RLKI…KMAK, ELEE…IMNC, RMHT…MQLP, EVKC…ENLP, and KLQE…SLEL. Residues 1131–1378 enclose the PPM-type phosphatase domain; it reads SHGYTEASGV…DSISAVVVQL (248 aa). Residues Asp1166, Gly1167, Lys1330, and Asp1369 each contribute to the Mn(2+) site. Disordered regions lie at residues 1414 to 1465 and 1604 to 1687; these read DRPS…SSPA and PGGY…DTPL. The segment covering 1424–1445 has biased composition (low complexity); it reads SSSSGMASEISSELSTSEMSSE. The segment covering 1649–1669 has biased composition (pro residues); sequence LPPPPQPPQPQPQPQPQPQPQ. The short motif at 1685 to 1687 is the PDZ-binding element; sequence TPL.

In terms of assembly, interacts with the nucleotide free form of K-Ras (KRAS) via its LRR repeats. Interacts with AKT2, AKT3 and PRKCB. Interacts with WDR48 and USP12. Mn(2+) is required as a cofactor. In terms of tissue distribution, isoforms 1 and 2 are expressed in the retina.

Its subcellular location is the cytoplasm. It is found in the membrane. The protein resides in the nucleus. The enzyme catalyses O-phospho-L-seryl-[protein] + H2O = L-seryl-[protein] + phosphate. It catalyses the reaction O-phospho-L-threonyl-[protein] + H2O = L-threonyl-[protein] + phosphate. Insensitive to okadaic acid. Deubiquitination by WDR48-USP12 complex positively regulates PHLPP1 stability. Functionally, protein phosphatase involved in regulation of Akt and PKC signaling. Mediates dephosphorylation in the C-terminal domain hydrophobic motif of members of the AGC Ser/Thr protein kinase family; specifically acts on 'Ser-473' of AKT2 and AKT3, 'Ser-660' of PRKCB and 'Ser-657' of PRKCA. Isoform 2 seems to have a major role in regulating Akt signaling in hippocampal neurons. Akt regulates the balance between cell survival and apoptosis through a cascade that primarily alters the function of transcription factors that regulate pro- and antiapoptotic genes. Dephosphorylation of 'Ser-473' of Akt triggers apoptosis and suppression of tumor growth. Dephosphorylation of PRKCA and PRKCB leads to their destabilization and degradation. Dephosphorylates STK4 on 'Thr-387' leading to STK4 activation and apoptosis. Dephosphorylates RPS6KB1 and is involved in regulation of cap-dependent translation. Inhibits cancer cell proliferation and may act as a tumor suppressor. Dephosphorylates RAF1 inhibiting its kinase activity. May act as a negative regulator of K-Ras signaling in membrane rafts. Involved in the hippocampus-dependent long-term memory formation. Involved in circadian control by regulating the consolidation of circadian periodicity after resetting. Involved in development and function of regulatory T-cells. The chain is PH domain leucine-rich repeat-containing protein phosphatase 1 (Phlpp1) from Mus musculus (Mouse).